Here is a 269-residue protein sequence, read N- to C-terminus: 3-ketodihydrosphingosine reductase (269 aa).

NADPH contacts are provided by Gly10, Ser12, Ser13, Gly14, Lys36, and Asp50. A GXSXG motif is present at residues 10–14; it reads GASSG. The Nucleophile; for lipase activity role is filled by Ser12. Residue Ser128 is the Proton donor of the active site. Tyr142 acts as the Proton acceptor in catalysis. Residues Tyr142 and Lys146 each contribute to the NADP(+) site. NADPH-binding positions include 142 to 146 and 175 to 177; these read YSASK and FNT. Lys146 is an active-site residue. The active-site Lowers pKa of active site Tyr is the Lys146.

It belongs to the short-chain dehydrogenases/reductases (SDR) family.

The catalysed reaction is sphinganine + NADP(+) = 3-oxosphinganine + NADPH + H(+). The protein operates within lipid metabolism; sphingolipid metabolism. Functionally, catalyzes the reduction of 3'-oxosphinganine (3-ketodihydrosphingosine/KDS) to sphinganine (dihydrosphingosine/DHS), the second step of de novo sphingolipid biosynthesis. The polypeptide is 3-ketodihydrosphingosine reductase (Bacteroides thetaiotaomicron (strain ATCC 29148 / DSM 2079 / JCM 5827 / CCUG 10774 / NCTC 10582 / VPI-5482 / E50)).